We begin with the raw amino-acid sequence, 90 residues long: Small ribosomal subunit protein uS15c (90 aa).

It belongs to the universal ribosomal protein uS15 family. As to quaternary structure, part of the 30S ribosomal subunit.

The protein resides in the plastid. The protein localises to the chloroplast. In Secale cereale (Rye), this protein is Small ribosomal subunit protein uS15c (rps15).